The following is a 367-amino-acid chain: Glutamate 5-kinase (367 aa).

Residue Lys-9 participates in ATP binding. Substrate contacts are provided by Ser-49, Asp-136, and Asn-148. Residues 168–169 (TD) and 210–216 (TGGMKSK) contribute to the ATP site. Residues 276 to 350 (SGQIEVDAGA…GMQSQDIQAR (75 aa)) enclose the PUA domain.

Belongs to the glutamate 5-kinase family.

The protein resides in the cytoplasm. It carries out the reaction L-glutamate + ATP = L-glutamyl 5-phosphate + ADP. It functions in the pathway amino-acid biosynthesis; L-proline biosynthesis; L-glutamate 5-semialdehyde from L-glutamate: step 1/2. Its function is as follows. Catalyzes the transfer of a phosphate group to glutamate to form L-glutamate 5-phosphate. This is Glutamate 5-kinase from Bacillus mycoides (strain KBAB4) (Bacillus weihenstephanensis).